Here is a 428-residue protein sequence, read N- to C-terminus: Cysteine synthase 2 (428 aa).

Residues I7–F27 traverse the membrane as a helical segment. Position 106 is an N6-(pyridoxal phosphate)lysine (K106). Pyridoxal 5'-phosphate-binding positions include G260–T264 and S367.

The protein belongs to the cysteine synthase/cystathionine beta-synthase family. Pyridoxal 5'-phosphate is required as a cofactor.

It localises to the mitochondrion outer membrane. It catalyses the reaction O-acetyl-L-serine + hydrogen sulfide = L-cysteine + acetate. Putative cysteine synthase that catalyzes the conversion of O-acetyl-L-serine (OAS) into cysteine, the last step in the cysteine biosynthesis pathway. However, in contrast to cysteine synthase cysB, this CS-like protein seems not to function in cysteine biosynthesis. The protein is Cysteine synthase 2 of Emericella nidulans (strain FGSC A4 / ATCC 38163 / CBS 112.46 / NRRL 194 / M139) (Aspergillus nidulans).